The chain runs to 396 residues: Ribosomal RNA large subunit methyltransferase I (396 aa).

The region spanning 2 to 81 (TVRLILAKGR…ESIDIDFFVR (80 aa)) is the PUA domain.

This sequence belongs to the methyltransferase superfamily. RlmI family.

It localises to the cytoplasm. The enzyme catalyses cytidine(1962) in 23S rRNA + S-adenosyl-L-methionine = 5-methylcytidine(1962) in 23S rRNA + S-adenosyl-L-homocysteine + H(+). In terms of biological role, specifically methylates the cytosine at position 1962 (m5C1962) of 23S rRNA. The chain is Ribosomal RNA large subunit methyltransferase I from Erwinia tasmaniensis (strain DSM 17950 / CFBP 7177 / CIP 109463 / NCPPB 4357 / Et1/99).